The chain runs to 263 residues: 3-methyl-2-oxobutanoate hydroxymethyltransferase (263 aa).

Positions 45 and 84 each coordinate Mg(2+). Residues 45–46, aspartate 84, and lysine 112 each bind 3-methyl-2-oxobutanoate; that span reads DS. Residue glutamate 114 participates in Mg(2+) binding. The Proton acceptor role is filled by glutamate 180.

The protein belongs to the PanB family. In terms of assembly, homodecamer; pentamer of dimers. Mg(2+) serves as cofactor.

The protein localises to the cytoplasm. The enzyme catalyses 3-methyl-2-oxobutanoate + (6R)-5,10-methylene-5,6,7,8-tetrahydrofolate + H2O = 2-dehydropantoate + (6S)-5,6,7,8-tetrahydrofolate. It functions in the pathway cofactor biosynthesis; (R)-pantothenate biosynthesis; (R)-pantoate from 3-methyl-2-oxobutanoate: step 1/2. Its function is as follows. Catalyzes the reversible reaction in which hydroxymethyl group from 5,10-methylenetetrahydrofolate is transferred onto alpha-ketoisovalerate to form ketopantoate. The protein is 3-methyl-2-oxobutanoate hydroxymethyltransferase of Salmonella agona (strain SL483).